We begin with the raw amino-acid sequence, 621 residues long: Very-long-chain aldehyde decarbonylase GL1-5 (621 aa).

The next 5 membrane-spanning stretches (helical) occupy residues 99–119 (IILS…GQHL), 126–146 (GAGL…YWFH), 186–206 (LLFS…IIAF), 224–244 (FELV…LMYT), and 332–352 (MWPL…SFTV). Residues 138-272 (VEFLYYWFHR…MPFYDYIYNT (135 aa)) form the Fatty acid hydroxylase domain.

The protein belongs to the sterol desaturase family. Homodimer. In terms of tissue distribution, expressed in panicles, developing spikelets, stamens and hulls and, at low levels, in roots, developing seeds, flag leaves and seedling shoots. Strongly expressed in the epidermal cells of anthers.

It localises to the endoplasmic reticulum membrane. It catalyses the reaction a long-chain fatty aldehyde + 2 NADPH + O2 + H(+) = a long-chain alkane + formate + 2 NADP(+) + H2O. In terms of biological role, aldehyde decarbonylase involved in the conversion of aldehydes to alkanes. Core component of a very-long-chain alkane synthesis complex. Required for the biosynthesis of very-long-chain fatty acids (including polyesters) in cuticles, anther tapetum and pollen exine. The chain is Very-long-chain aldehyde decarbonylase GL1-5 from Oryza sativa subsp. japonica (Rice).